Consider the following 337-residue polypeptide: LIX1-like protein (337 aa).

The interval 1 to 64 (METMRAQRLQ…PLLLSGAPGL (64 aa)) is disordered. Low complexity predominate over residues 26–38 (PGVTGAAAATATP). Positions 39–56 (PAGPPPAPPPPAPPPPPL) are enriched in pro residues.

Belongs to the LIX1 family.

This is LIX1-like protein (LIX1L) from Homo sapiens (Human).